The primary structure comprises 849 residues: Putative pentatricopeptide repeat-containing protein At5g08490 (849 aa).

20 PPR repeats span residues 20–54, 55–89, 121–155, 156–187, 188–222, 223–260, 262–296, 297–327, 329–363, 365–399, 400–430, 431–465, 469–499, 501–531, 532–566, 567–597, 601–631, 632–666, 667–702, and 703–733; these read DHRV…GHIA, CSEV…DPVV, SSVT…GLEK, DTLV…IADK, DVVS…PTEP, NYAT…SWLQ, HVFV…DLVS, WNVV…GDVS, DSVT…SYLL, DTSV…DIIS, WNAI…AITL, DSVT…GLLH, EPKL…LSER, TLVS…MSTT, DLTT…GMRP, NTVT…IIRG, DIRL…DARR, DLVM…NIKP, DHVF…GMKP, and TMEQ…MPVE. The type E motif stretch occupies residues 738 to 813; that stretch reads IWGTLLRACT…PAGCSWLEVD (76 aa). The interval 814 to 844 is type E(+) motif; it reads GQRNVFVSGDCSHPRRDSIFDLVNALYLQMK.

Belongs to the PPR family. PCMP-E subfamily.

This Arabidopsis thaliana (Mouse-ear cress) protein is Putative pentatricopeptide repeat-containing protein At5g08490 (PCMP-E32).